We begin with the raw amino-acid sequence, 208 residues long: Putative proteasome subunit alpha type-4-B (208 aa).

The protein belongs to the peptidase T1A family. Component of the 20S core complex of the 26S proteasome. The 26S proteasome is composed of a core protease (CP), known as the 20S proteasome, capped at one or both ends by the 19S regulatory particle (RP/PA700). The 20S proteasome core is composed of 28 subunits that are arranged in four stacked rings, resulting in a barrel-shaped structure. The two end rings are each formed by seven alpha subunits, and the two central rings are each formed by seven beta subunits. The catalytic chamber with the active sites is on the inside of the barrel.

Its subcellular location is the cytoplasm. It is found in the nucleus. The proteasome is a multicatalytic proteinase complex which is characterized by its ability to cleave peptides with Arg, Phe, Tyr, Leu, and Glu adjacent to the leaving group at neutral or slightly basic pH. The proteasome has an ATP-dependent proteolytic activity. This chain is Putative proteasome subunit alpha type-4-B (PAC2), found in Arabidopsis thaliana (Mouse-ear cress).